The chain runs to 241 residues: Uridylate kinase (241 aa).

12–15 (KLSG) provides a ligand contact to ATP. Residues 20–25 (GDKGQG) are involved in allosteric activation by GTP. UMP is bound at residue Gly-54. Positions 55 and 59 each coordinate ATP. Residues Asp-74 and 135-142 (TGSPYFST) contribute to the UMP site. Residues Asn-163, Tyr-169, and Asp-172 each contribute to the ATP site.

Belongs to the UMP kinase family. In terms of assembly, homohexamer.

The protein localises to the cytoplasm. The enzyme catalyses UMP + ATP = UDP + ADP. The protein operates within pyrimidine metabolism; CTP biosynthesis via de novo pathway; UDP from UMP (UMPK route): step 1/1. With respect to regulation, allosterically activated by GTP. Inhibited by UTP. Catalyzes the reversible phosphorylation of UMP to UDP. This is Uridylate kinase from Leuconostoc mesenteroides subsp. mesenteroides (strain ATCC 8293 / DSM 20343 / BCRC 11652 / CCM 1803 / JCM 6124 / NCDO 523 / NBRC 100496 / NCIMB 8023 / NCTC 12954 / NRRL B-1118 / 37Y).